Here is a 108-residue protein sequence, read N- to C-terminus: Nucleoid-associated protein BamMC406_1737 (108 aa).

Positions 85–95 are enriched in polar residues; sequence ATSQEKMSGMT. The segment at 85 to 108 is disordered; the sequence is ATSQEKMSGMTSGLPLPPGFKLPF. Pro residues predominate over residues 99–108; that stretch reads PLPPGFKLPF.

This sequence belongs to the YbaB/EbfC family. As to quaternary structure, homodimer.

The protein localises to the cytoplasm. The protein resides in the nucleoid. Binds to DNA and alters its conformation. May be involved in regulation of gene expression, nucleoid organization and DNA protection. The sequence is that of Nucleoid-associated protein BamMC406_1737 from Burkholderia ambifaria (strain MC40-6).